An 882-amino-acid polypeptide reads, in one-letter code: Alanine--tRNA ligase (882 aa).

H568, H572, C670, and H674 together coordinate Zn(2+).

It belongs to the class-II aminoacyl-tRNA synthetase family. Zn(2+) serves as cofactor.

It is found in the cytoplasm. It catalyses the reaction tRNA(Ala) + L-alanine + ATP = L-alanyl-tRNA(Ala) + AMP + diphosphate. Catalyzes the attachment of alanine to tRNA(Ala) in a two-step reaction: alanine is first activated by ATP to form Ala-AMP and then transferred to the acceptor end of tRNA(Ala). Also edits incorrectly charged Ser-tRNA(Ala) and Gly-tRNA(Ala) via its editing domain. The sequence is that of Alanine--tRNA ligase from Syntrophotalea carbinolica (strain DSM 2380 / NBRC 103641 / GraBd1) (Pelobacter carbinolicus).